A 656-amino-acid polypeptide reads, in one-letter code: Protein arginine N-methyltransferase 7 (656 aa).

SAM-dependent MTase PRMT-type domains are found at residues 12–338 (EREW…FSIW) and 343–656 (GKDS…QSGN).

Belongs to the class I-like SAM-binding methyltransferase superfamily. Protein arginine N-methyltransferase family. PRMT7 subfamily.

In terms of biological role, arginine methyltransferase that can both catalyze the formation of omega-N monomethylarginine (MMA) and symmetrical dimethylarginine (sDMA). The polypeptide is Protein arginine N-methyltransferase 7 (prmt-7) (Caenorhabditis briggsae).